The sequence spans 122 residues: Large ribosomal subunit protein uL29B (122 aa).

Positions 10–69 (QLGIKQIEERAAEIKAELAALRQKKNSGDVGANDIKTAKKNLARALTVRREKILEELVEA) form a coiled coil.

The protein belongs to the universal ribosomal protein uL29 family. As to quaternary structure, component of the large ribosomal subunit.

Its subcellular location is the cytoplasm. In Encephalitozoon cuniculi (strain GB-M1) (Microsporidian parasite), this protein is Large ribosomal subunit protein uL29B (RPL35C).